The primary structure comprises 102 residues: Small ribosomal subunit protein uS10 (102 aa).

The protein belongs to the universal ribosomal protein uS10 family. Part of the 30S ribosomal subunit.

Its function is as follows. Involved in the binding of tRNA to the ribosomes. This chain is Small ribosomal subunit protein uS10, found in Phenylobacterium zucineum (strain HLK1).